The sequence spans 613 residues: MIQVLLVTLCLAAFPYQGSSIILDSGNVNDYEVVYPRKVTALPKGAVQPKYEDTMQYEFKVNGEPVVLHLEKNKGLFSEDYSETHYSPDGREITTYPSIEDHCYYRGRIQNDADSTASISACNGLKGHFKLQGEMYLIEPLKLPDSEAHAVYKYENIEKEDEAPKMCGVTQTNWKSDEPIKKASQLVVTPEEQRYLNTKKYIELVIVADNVMVKKYTSNSTAIRTRIYACVNTLNLIYRAFNIYIALIGLEIWSNRDLINVQSASSVTLDLFGTWRETVLLRHKRHDNAQLLTGINFDGDTVGLAYVGSMCDPKRSAGIIQDHNKLDVMVAIAMAHELGHDLGINHDGNQCNCGGNPCIMSATLNFEPVYRFSDCSRDEHWRYLIDNRPPCILNKPSITDIVSPPVCGNYFVEVGEECDCGLPAHCQNPCCDAATCKLRPETQCEDGECCEQCQFTRAGTECRAARSECDIAESCTGQSAECPTDDFQRNGQPCLNNNGYCYNGTCPILTNQCISFFGSSATVAPDVCFDFNLQGQGNFYCRRERARIFPCAPQDKKCGRLFCVKGPIGNTISCQSTSSQSDLDIGMVDLGTKCGDGRVCNSNRQCVDVNTAY.

A signal peptide spans 1 to 20; it reads MIQVLLVTLCLAAFPYQGSS. Residues 21–190 constitute a propeptide that is removed on maturation; the sequence is IILDSGNVND…KKASQLVVTP (170 aa). Residues 200–396 form the Peptidase M12B domain; the sequence is KYIELVIVAD…NRPPCILNKP (197 aa). Glutamate 203 provides a ligand contact to Ca(2+). N-linked (GlcNAc...) asparagine glycosylation is present at asparagine 219. Aspartate 287 provides a ligand contact to Ca(2+). Intrachain disulfides connect cysteine 311–cysteine 391, cysteine 351–cysteine 375, and cysteine 353–cysteine 358. Histidine 336 contributes to the Zn(2+) binding site. Glutamate 337 is a catalytic residue. The Zn(2+) site is built by histidine 340 and histidine 346. The Ca(2+) site is built by cysteine 391, asparagine 394, valine 406, asparagine 409, phenylalanine 411, glutamate 413, glutamate 416, and aspartate 419. The 87-residue stretch at 404-490 folds into the Disintegrin domain; that stretch reads PPVCGNYFVE…ECPTDDFQRN (87 aa). Disulfide bonds link cysteine 407-cysteine 436, cysteine 418-cysteine 431, cysteine 420-cysteine 426, cysteine 430-cysteine 453, cysteine 444-cysteine 450, cysteine 449-cysteine 475, cysteine 462-cysteine 482, cysteine 469-cysteine 501, cysteine 494-cysteine 506, cysteine 513-cysteine 563, cysteine 528-cysteine 574, cysteine 541-cysteine 551, cysteine 558-cysteine 600, and cysteine 594-cysteine 606. A D/ECD-tripeptide motif is present at residues 468-470; it reads ECD. Asparagine 503 carries an N-linked (GlcNAc...) asparagine glycan.

Belongs to the venom metalloproteinase (M12B) family. P-III subfamily. P-IIIa sub-subfamily. In terms of assembly, monomer. Zn(2+) is required as a cofactor. In terms of tissue distribution, expressed by the venom gland.

Its subcellular location is the secreted. Its function is as follows. Snake venom metalloproteinase that impairs hemostasis in the envenomed animal. The polypeptide is Zinc metalloproteinase-disintegrin-like VMP-III (Agkistrodon piscivorus leucostoma (Western cottonmouth)).